Here is a 472-residue protein sequence, read N- to C-terminus: Major capsid protein (472 aa).

The protein belongs to the phi29 phage major capsid protein family.

It localises to the virion. Its function is as follows. Assembles to form a prolate capsid of about 45x54 nm, with a T=3, Q=5 symmetry. The chain is Major capsid protein (8) from Bacillus phage GA-1 (Bacteriophage GA-1).